The primary structure comprises 502 residues: Probable glycine dehydrogenase (decarboxylating) subunit 2 (502 aa).

At lysine 273 the chain carries N6-(pyridoxal phosphate)lysine.

It belongs to the GcvP family. C-terminal subunit subfamily. The glycine cleavage system is composed of four proteins: P, T, L and H. In this organism, the P 'protein' is a heterodimer of two subunits. The cofactor is pyridoxal 5'-phosphate.

It carries out the reaction N(6)-[(R)-lipoyl]-L-lysyl-[glycine-cleavage complex H protein] + glycine + H(+) = N(6)-[(R)-S(8)-aminomethyldihydrolipoyl]-L-lysyl-[glycine-cleavage complex H protein] + CO2. In terms of biological role, the glycine cleavage system catalyzes the degradation of glycine. The P protein binds the alpha-amino group of glycine through its pyridoxal phosphate cofactor; CO(2) is released and the remaining methylamine moiety is then transferred to the lipoamide cofactor of the H protein. In Pyrococcus abyssi (strain GE5 / Orsay), this protein is Probable glycine dehydrogenase (decarboxylating) subunit 2.